The following is a 445-amino-acid chain: Phosphoglucosamine mutase (445 aa).

The Phosphoserine intermediate role is filled by S102. S102, D241, D243, and D245 together coordinate Mg(2+). Residue S102 is modified to Phosphoserine.

It belongs to the phosphohexose mutase family. The cofactor is Mg(2+). Activated by phosphorylation.

The enzyme catalyses alpha-D-glucosamine 1-phosphate = D-glucosamine 6-phosphate. Functionally, catalyzes the conversion of glucosamine-6-phosphate to glucosamine-1-phosphate. The polypeptide is Phosphoglucosamine mutase (Hahella chejuensis (strain KCTC 2396)).